Consider the following 805-residue polypeptide: MWDQGGQPWQQWPLNQQQWMQSFQHQQDPSQIDWAALAQAWIAQREASGQQSIVEQPPGMMPNGQDMSAMESGPNNHGNFQGDSNFNRMWQPEWGMHQQPPHPPPEQPWMPPAPGPMDIVPPSEDSNSQDSGEFAPDNRHIFNQNNHNFGGPPDNFAVGPVNQFDYQHGAAFGPPQGGFHPPYWQPGPPGPPAPTQNRRERPPSFRDRQRSPIALPVKQEPPQIDAVKRRTLPAWIREGLEKMEREKQKKLEKERMEQQRSQLSKKEKKATEDAEGGDGPRLPQRSKFDSDEEDEDAENLEAVSSGKVTRSPSPAPQEEHSEPEMTEEEKEYQMMLLTKMLLTEILLDVTDEEIYYVAKDAHRKATKAPAKQLAQSSALASLTGLGGLGGYGSGDSEDERSDRGSESSDTDDEELRHRIRQKQEAFWRKEKEQQLLQDKQIEEEKQQTERVTKEMNEFIHREQNSLSLLEASEADRDAVNDKKRTPNEAPSVLEPKREHKGKEKERGSRSGSSSSGSSSSGSRTSSSSSSVSSSSYSSSSGSSCTSSRSSSPKRRKRPSRSRSPPAKARRSRSRSYSRRVKVDSSRTRGKLRDRRRSNRSSIERERRRNRSPSRDRRRSRSRSRDRRTNRSSRSRSRDRRKIEDPRGNLSGNSHKHKGEAKEQDRKKERSRSVDKDRRKKDKERDRELDKRKEKQKREEKDFKFSSQDDRLKRKRESERTFCRSGSISVKVIRHDSRQDSKKNATKDSKRHSGSDSSGRSSSESPGSSKEKKAKKPKHSRSRSLEKSQRSGKKASRKHKSKSRSR.

Residues 75 to 88 (NNHGNFQGDSNFNR) show a composition bias toward polar residues. Disordered stretches follow at residues 75-331 (NNHG…EEKE) and 382-805 (LTGL…SRSR). 2 stretches are compositionally biased toward pro residues: residues 100–115 (PPHP…PAPG) and 183–194 (YWQPGPPGPPAP). Residues 197–210 (NRRERPPSFRDRQR) are compositionally biased toward basic and acidic residues. 2 positions are modified to phosphoserine: S204 and S211. K218 is covalently cross-linked (Glycyl lysine isopeptide (Lys-Gly) (interchain with G-Cter in SUMO2)). Residues 237 to 276 (REGLEKMEREKQKKLEKERMEQQRSQLSKKEKKATEDAEG) adopt a coiled-coil conformation. Residues 238-258 (EGLEKMEREKQKKLEKERMEQ) show a composition bias toward basic and acidic residues. Residues S290, S304, S313, and S321 each carry the phosphoserine modification. The span at 290–299 (SDEEDEDAEN) shows a compositional bias: acidic residues. Gly residues predominate over residues 384-393 (GLGGLGGYGS). Positions 421–463 (QKQEAFWRKEKEQQLLQDKQIEEEKQQTERVTKEMNEFIHREQ) are enriched in basic and acidic residues. Positions 427–461 (WRKEKEQQLLQDKQIEEEKQQTERVTKEMNEFIHR) form a coiled coil. S465 and S467 each carry phosphoserine. 2 stretches are compositionally biased toward basic and acidic residues: residues 473–486 (EADR…KRTP) and 494–508 (EPKR…ERGS). Phosphothreonine is present on T485. K496 participates in a covalent cross-link: Glycyl lysine isopeptide (Lys-Gly) (interchain with G-Cter in SUMO2). Residues 509 to 550 (RSGSSSSGSSSSGSRTSSSSSSVSSSSYSSSSGSSCTSSRSS) are compositionally biased toward low complexity. 4 stretches are compositionally biased toward basic residues: residues 551–560 (SPKRRKRPSR), 567–579 (KARR…YSRR), 587–598 (TRGKLRDRRRSN), and 607–639 (RRNR…SRDR). Positions 659–721 (EAKEQDRKKE…KRKRESERTF (63 aa)) are enriched in basic and acidic residues. A Glycyl lysine isopeptide (Lys-Gly) (interchain with G-Cter in SUMO2) cross-link involves residue K703. S726 is modified (phosphoserine). Basic and acidic residues predominate over residues 732 to 753 (IRHDSRQDSKKNATKDSKRHSG). Positions 754–767 (SDSSGRSSSESPGS) are enriched in low complexity. Basic residues-rich tracts occupy residues 771–781 (KKAKKPKHSRS) and 789–805 (RSGK…SRSR).

Belongs to the splicing factor SR family. In terms of assembly, interacts with PNN.

Its subcellular location is the nucleus speckle. This is Arginine/serine-rich protein PNISR (Pnisr) from Mus musculus (Mouse).